The sequence spans 759 residues: LPS-assembly protein LptD (759 aa).

The first 45 residues, 1–45 (MKPLKLELNPRDFNHYQAAFLPYRMKIKQPLHVLCFSVCSLSAVA), serve as a signal peptide directing secretion.

This sequence belongs to the LptD family. Component of the lipopolysaccharide transport and assembly complex. Interacts with LptE and LptA.

It is found in the cell outer membrane. Its function is as follows. Together with LptE, is involved in the assembly of lipopolysaccharide (LPS) at the surface of the outer membrane. The chain is LPS-assembly protein LptD from Pseudoalteromonas atlantica (strain T6c / ATCC BAA-1087).